A 213-amino-acid chain; its full sequence is dITP/XTP pyrophosphatase (213 aa).

Residue 17–22 (SNNAGK) participates in substrate binding. Glutamate 49 and aspartate 78 together coordinate Mg(2+). The active-site Proton acceptor is aspartate 78. Residues serine 79, 164 to 167 (FGYD), lysine 187, and 192 to 193 (HR) contribute to the substrate site.

The protein belongs to the HAM1 NTPase family. In terms of assembly, homodimer. Requires Mg(2+) as cofactor.

It catalyses the reaction XTP + H2O = XMP + diphosphate + H(+). It carries out the reaction dITP + H2O = dIMP + diphosphate + H(+). The catalysed reaction is ITP + H2O = IMP + diphosphate + H(+). Functionally, pyrophosphatase that catalyzes the hydrolysis of nucleoside triphosphates to their monophosphate derivatives, with a high preference for the non-canonical purine nucleotides XTP (xanthosine triphosphate), dITP (deoxyinosine triphosphate) and ITP. Seems to function as a house-cleaning enzyme that removes non-canonical purine nucleotides from the nucleotide pool, thus preventing their incorporation into DNA/RNA and avoiding chromosomal lesions. The chain is dITP/XTP pyrophosphatase from Bordetella bronchiseptica (strain ATCC BAA-588 / NCTC 13252 / RB50) (Alcaligenes bronchisepticus).